Consider the following 238-residue polypeptide: Group 3 late-embryogenesis abundant protein, mitochondrial (238 aa).

The interval 41-62 is disordered; the sequence is SSGSGRPADNWAESQKEKAKAG. Residues 50 to 202 adopt a coiled-coil conformation; sequence NWAESQKEKA…AGDLKDKAQQ (153 aa). LEA 11-mer repeat repeat units follow at residues 64 to 74, 89 to 99, 140 to 150, 151 to 161, 179 to 189, and 190 to 200; these read KDAQAEVGKVA, KDAVKQGANDL, KEAAENAWEKT, KDVAENLKDKV, KDRAQDAASEV, and KHKAGDLKDKA. Composition is skewed to basic and acidic residues over residues 182-200 and 213-225; these read AQDA…KDKA and DNRK…RRDS. Residues 182-238 form a disordered region; sequence AQDAASEVKHKAGDLKDKAQQVIHDATTQSGDNRKQDQQQRRDSQGSQSGQNSRSRN. The span at 226 to 238 shows a compositional bias: low complexity; sequence QGSQSGQNSRSRN.

Belongs to the LEA type 4 family.

Its subcellular location is the mitochondrion. Mitochondrial heat soluble protein acting as a molecular shield in water-deficient condition. The polypeptide is Group 3 late-embryogenesis abundant protein, mitochondrial (Hypsibius exemplaris (Freshwater tardigrade)).